The chain runs to 921 residues: Isoleucine--tRNA ligase (921 aa).

The 'HIGH' region motif lies at 57 to 67 (PYANGELHMGH). Position 552 (glutamate 552) interacts with L-isoleucyl-5'-AMP. Positions 593-597 (KMSKS) match the 'KMSKS' region motif. An ATP-binding site is contributed by lysine 596. 4 residues coordinate Zn(2+): cysteine 888, cysteine 891, cysteine 908, and cysteine 911.

It belongs to the class-I aminoacyl-tRNA synthetase family. IleS type 1 subfamily. Monomer. Requires Zn(2+) as cofactor.

The protein localises to the cytoplasm. It carries out the reaction tRNA(Ile) + L-isoleucine + ATP = L-isoleucyl-tRNA(Ile) + AMP + diphosphate. Its function is as follows. Catalyzes the attachment of isoleucine to tRNA(Ile). As IleRS can inadvertently accommodate and process structurally similar amino acids such as valine, to avoid such errors it has two additional distinct tRNA(Ile)-dependent editing activities. One activity is designated as 'pretransfer' editing and involves the hydrolysis of activated Val-AMP. The other activity is designated 'posttransfer' editing and involves deacylation of mischarged Val-tRNA(Ile). The polypeptide is Isoleucine--tRNA ligase (Listeria monocytogenes serotype 4b (strain F2365)).